We begin with the raw amino-acid sequence, 224 residues long: MDEAIIVDAEFVAPVGTTAGEFVPIDRAPAAGLLLLVAFVVLYAKVISKLGKPAIQEFLWEIITRIVPSKQLRRRKEAQLRAIEVHTQRSNTSSQDQFAKWAKLDREYGKLKVEIEDINNLLTASKARFFTIISSAIFLSTTGMKMFLRIKHRKAAIFWLPKNAFPYPIEYILSFSSAPLGSVSVSAWLMICDAAMDLIVTIFVALVVGVIGMLRSNKVKPKTA.

The Lumenal segment spans residues 1–33 (MDEAIIVDAEFVAPVGTTAGEFVPIDRAPAAGL). Residues 34–53 (LLLVAFVVLYAKVISKLGKP) traverse the membrane as a helical segment. The Cytoplasmic segment spans residues 54–137 (AIQEFLWEII…RFFTIISSAI (84 aa)). The stretch at 102 to 124 (AKLDREYGKLKVEIEDINNLLTA) forms a coiled coil. A helical transmembrane segment spans residues 138-158 (FLSTTGMKMFLRIKHRKAAIF). Over 159 to 182 (WLPKNAFPYPIEYILSFSSAPLGS) the chain is Lumenal. The helical transmembrane segment at 183 to 199 (VSVSAWLMICDAAMDLI) threads the bilayer. The Cytoplasmic segment spans residues 200 to 224 (VTIFVALVVGVIGMLRSNKVKPKTA).

It belongs to the WRB/GET1 family. Component of the Golgi to ER traffic (GET) complex, which is composed of GET1, GET2 and GET3. Within the complex, GET1 and GET2 form a heterotetramer which is stabilized by phosphatidylinositol binding and which binds to the GET3 homodimer.

The protein resides in the endoplasmic reticulum membrane. The protein localises to the golgi apparatus membrane. Its function is as follows. Required for the post-translational delivery of tail-anchored (TA) proteins to the endoplasmic reticulum. Together with GET2, acts as a membrane receptor for soluble GET3, which recognizes and selectively binds the transmembrane domain of TA proteins in the cytosol. The GET complex cooperates with the HDEL receptor ERD2 to mediate the ATP-dependent retrieval of resident ER proteins that contain a C-terminal H-D-E-L retention signal from the Golgi to the ER. The sequence is that of Golgi to ER traffic protein 1 from Yarrowia lipolytica (strain CLIB 122 / E 150) (Yeast).